A 406-amino-acid polypeptide reads, in one-letter code: Cysteine desulfurase (406 aa).

Position 226 is an N6-(pyridoxal phosphate)lysine (Lys226). Catalysis depends on Cys364, which acts as the Cysteine persulfide intermediate.

This sequence belongs to the class-V pyridoxal-phosphate-dependent aminotransferase family. Csd subfamily. Homodimer. Interacts with SufE and the SufBCD complex composed of SufB, SufC and SufD. The interaction with SufE is required to mediate the direct transfer of the sulfur atom from the S-sulfanylcysteine. It depends on pyridoxal 5'-phosphate as a cofactor.

The protein localises to the cytoplasm. It catalyses the reaction (sulfur carrier)-H + L-cysteine = (sulfur carrier)-SH + L-alanine. It carries out the reaction L-selenocysteine + AH2 = hydrogenselenide + L-alanine + A + H(+). The protein operates within cofactor biosynthesis; iron-sulfur cluster biosynthesis. Its function is as follows. Cysteine desulfurases mobilize the sulfur from L-cysteine to yield L-alanine, an essential step in sulfur metabolism for biosynthesis of a variety of sulfur-containing biomolecules. Component of the suf operon, which is activated and required under specific conditions such as oxidative stress and iron limitation. Acts as a potent selenocysteine lyase in vitro, that mobilizes selenium from L-selenocysteine. Selenocysteine lyase activity is however unsure in vivo. This is Cysteine desulfurase from Escherichia coli (strain SE11).